Consider the following 354-residue polypeptide: MTSPLITKAEVNSVFQGRSLLAEKDFTPAEINYLVDFGLHLKALKQQNIPHHYLEGKNIALLFAKTSTRTRAAFTTAAIDLGAHPEYLGANDIQLGIKESTEDTARVLGSMFDAIERRGFSQKEVEDLAKYSGVPVWNGLTDDWHPTQMIADFMTVKENFGYLKGLTLVYVGDGRNNMANSLIVTGSMLGVNVHIVAPDSLHPSKEVMDIANKFAEKSGAKPLATSNIEEGVKGANIIYSDVWVSMGESNWEERVKLLTPYRITMDMLKMTGNADNGKLIFMHCLPAFHDTETEYGKEIKEKYGLTEMEVTDAVFRSKYARQFEEAENRMHSIKAIMAATLGNLFIPAVPEDFK.

Residues 67-70 (STRT), Gln94, Arg118, and 145-148 (HPTQ) contribute to the carbamoyl phosphate site. L-ornithine-binding positions include Asn177, Asp241, and 245–246 (SM). Carbamoyl phosphate contacts are provided by residues 284-285 (CL) and Arg329.

Belongs to the aspartate/ornithine carbamoyltransferase superfamily. OTCase family.

It localises to the cytoplasm. The catalysed reaction is carbamoyl phosphate + L-ornithine = L-citrulline + phosphate + H(+). Its pathway is amino-acid degradation; L-arginine degradation via ADI pathway; carbamoyl phosphate from L-arginine: step 2/2. Functionally, reversibly catalyzes the transfer of the carbamoyl group from carbamoyl phosphate (CP) to the N(epsilon) atom of ornithine (ORN) to produce L-citrulline. The sequence is that of Ornithine carbamoyltransferase, catabolic (arcB) from Lactococcus lactis subsp. cremoris (Streptococcus cremoris).